Consider the following 215-residue polypeptide: 7-cyano-7-deazaguanine synthase (215 aa).

8 to 18 (LSAGLDSTVSL) provides a ligand contact to ATP. 4 residues coordinate Zn(2+): Cys-191, Cys-199, Cys-202, and Cys-205.

It belongs to the QueC family. Homodimer. Requires Zn(2+) as cofactor.

It carries out the reaction 7-carboxy-7-deazaguanine + NH4(+) + ATP = 7-cyano-7-deazaguanine + ADP + phosphate + H2O + H(+). It participates in purine metabolism; 7-cyano-7-deazaguanine biosynthesis. Its function is as follows. Catalyzes the ATP-dependent conversion of 7-carboxy-7-deazaguanine (CDG) to 7-cyano-7-deazaguanine (preQ(0)). This is 7-cyano-7-deazaguanine synthase from Carboxydothermus hydrogenoformans (strain ATCC BAA-161 / DSM 6008 / Z-2901).